Here is a 60-residue protein sequence, read N- to C-terminus: Large ribosomal subunit protein uL30 (60 aa).

This sequence belongs to the universal ribosomal protein uL30 family. Part of the 50S ribosomal subunit.

The sequence is that of Large ribosomal subunit protein uL30 from Leifsonia xyli subsp. xyli (strain CTCB07).